The chain runs to 306 residues: Mitochondrial substrate carrier family protein M (306 aa).

At 1–10 (MRYILNNNVE) the chain is on the mitochondrial intermembrane side. Solcar repeat units lie at residues 5–98 (LNNN…YKNI), 108–195 (LNTF…IKFY), and 207–299 (LNAS…IKKS). Residues 11–31 (GTSALLGSTVATAFLQPFDFL) traverse the membrane as a helical segment. Residues 32 to 72 (KIRLQGSGFASGGDLNKFKRVGVIDTCKNVLKNEGIKQFWR) are Mitochondrial matrix-facing. Residues 73–89 (GSSPTIVASGIAWGTYM) form a helical membrane-spanning segment. The Mitochondrial intermembrane portion of the chain corresponds to 90–113 (HFYEAYKNILKSKYNVTQLNTFDH). The chain crosses the membrane as a helical span at residues 114 to 134 (FICAVGASATQVFITNPIFLI). Residues 135 to 163 (KTRMQLQTPGSANYYTGIFDGIKKTVKVE) lie on the Mitochondrial matrix side of the membrane. Residues 164–184 (GFKGLYKGVIPSLWLTFHGGI) form a helical membrane-spanning segment. Topologically, residues 185-211 (QMSSYEHIKFYFSSNSGKSLDSLNASE) are mitochondrial intermembrane. A helical membrane pass occupies residues 212–232 (IFIASSISKFLASTILYPFQV). Over 233–278 (VKTRLQDERNIPNQNNVRVYNGTKDVIFKILKNEGIIGFYRGLVPN) the chain is Mitochondrial matrix. The chain crosses the membrane as a helical span at residues 279-296 (TLKVIPNTSITLLLYEEI). The Mitochondrial intermembrane portion of the chain corresponds to 297–306 (KKSFNYIINE).

The protein belongs to the mitochondrial carrier (TC 2.A.29) family.

The protein localises to the mitochondrion inner membrane. In terms of biological role, mitochondrial solute carriers shuttle metabolites, nucleotides, and cofactors through the mitochondrial inner membrane. Transports folate across the inner membranes of mitochondria. The sequence is that of Mitochondrial substrate carrier family protein M (mcfM) from Dictyostelium discoideum (Social amoeba).